We begin with the raw amino-acid sequence, 136 residues long: Large ribosomal subunit protein uL16 (136 aa).

The protein belongs to the universal ribosomal protein uL16 family. In terms of assembly, part of the 50S ribosomal subunit.

In terms of biological role, binds 23S rRNA and is also seen to make contacts with the A and possibly P site tRNAs. The polypeptide is Large ribosomal subunit protein uL16 (Rickettsia akari (strain Hartford)).